A 397-amino-acid polypeptide reads, in one-letter code: F-box protein At3g28330 (397 aa).

Residues 6-56 (KKDMDFLTEDLWEIILARLPLKSIITTPKLVCKVWKSIIESRCFRDLFQSL) enclose the F-box domain.

In Arabidopsis thaliana (Mouse-ear cress), this protein is F-box protein At3g28330.